Reading from the N-terminus, the 728-residue chain is 1,4-alpha-glucan branching enzyme GlgB (728 aa).

The Nucleophile role is filled by Asp405. The active-site Proton donor is Glu458.

Belongs to the glycosyl hydrolase 13 family. GlgB subfamily. As to quaternary structure, monomer.

The catalysed reaction is Transfers a segment of a (1-&gt;4)-alpha-D-glucan chain to a primary hydroxy group in a similar glucan chain.. It participates in glycan biosynthesis; glycogen biosynthesis. In terms of biological role, catalyzes the formation of the alpha-1,6-glucosidic linkages in glycogen by scission of a 1,4-alpha-linked oligosaccharide from growing alpha-1,4-glucan chains and the subsequent attachment of the oligosaccharide to the alpha-1,6 position. The chain is 1,4-alpha-glucan branching enzyme GlgB from Salmonella paratyphi A (strain ATCC 9150 / SARB42).